A 622-amino-acid chain; its full sequence is Polygalacturonase 1 beta-like protein 1 (622 aa).

Residues 1–21 form the signal peptide; the sequence is MRKQFVFLLPFLSRLYHVVIA. The FXXY 1 repeat unit spans residues 118 to 121; sequence FSVY. N125 carries N-linked (GlcNAc...) asparagine glycosylation. 11 FXXY repeats span residues 126 to 129, 140 to 143, 154 to 157, 168 to 171, 182 to 185, 196 to 199, 210 to 213, 224 to 227, 239 to 242, 253 to 256, and 267 to 270; these read FTNY, FKKY, FRRY, FTGY, FNSY, FKNY, FKAY, FKTY, FTSY, FSSY, and FSNY. Residue N278 is glycosylated (N-linked (GlcNAc...) asparagine). 7 FXXY repeats span residues 281 to 284, 295 to 298, 309 to 312, 323 to 326, 337 to 340, 351 to 354, and 365 to 368; these read FKGY, FKSY, FLNY, FSSY, FVNY, FSGY, and FKTY. Residue N371 is glycosylated (N-linked (GlcNAc...) asparagine). 2 FXXY repeats span residues 374–377 and 384–387; these read FKDY and FAKY. Residues N388 and N461 are each glycosylated (N-linked (GlcNAc...) asparagine). In terms of domain architecture, BURP spans 407–621; the sequence is FFRESMLKEG…FENDMNWAIA (215 aa).

As to expression, expressed in flowers and stems.

It is found in the secreted. It localises to the extracellular space. The protein localises to the apoplast. Its subcellular location is the cell wall. Functionally, involved in cell size determination. In Arabidopsis thaliana (Mouse-ear cress), this protein is Polygalacturonase 1 beta-like protein 1.